A 485-amino-acid polypeptide reads, in one-letter code: Tektin-5 (485 aa).

Coiled coils occupy residues 114 to 185, 225 to 247, 307 to 385, and 421 to 444; these read RLTD…EVNC, QEQM…DAQH, QNMR…MAKE, and TIDD…QLLV.

The protein belongs to the tektin family. Microtubule inner protein component of sperm flagellar doublet microtubules. Interacts with TEKT3. Post-translationally, ubiquitinated, leading to its degradation. Deubiquitinated by USP16, promoting its stability.

The protein resides in the cytoplasm. Its subcellular location is the cytoskeleton. It is found in the flagellum axoneme. Functionally, sperm-specific microtubule inner protein (MIP) part of the dynein-decorated doublet microtubules (DMTs) in flagellar axoneme. Forms an extensive interaction network in different conformations that reinforces the helix bundle composed by other tektin proteins (TEKT1 to TEKT4) and MIPs to anchor the tektin bundle onto the tubulin wall of A-tubule of the sperm flagellum. The polypeptide is Tektin-5 (TEKT5) (Homo sapiens (Human)).